A 430-amino-acid polypeptide reads, in one-letter code: Enolase (430 aa).

Residue Q168 participates in (2R)-2-phosphoglycerate binding. The active-site Proton donor is E210. Residues D247, E288, and D315 each coordinate Mg(2+). K340, R369, S370, and K391 together coordinate (2R)-2-phosphoglycerate. K340 functions as the Proton acceptor in the catalytic mechanism.

Belongs to the enolase family. Requires Mg(2+) as cofactor.

It localises to the cytoplasm. It is found in the secreted. Its subcellular location is the cell surface. It catalyses the reaction (2R)-2-phosphoglycerate = phosphoenolpyruvate + H2O. The protein operates within carbohydrate degradation; glycolysis; pyruvate from D-glyceraldehyde 3-phosphate: step 4/5. Catalyzes the reversible conversion of 2-phosphoglycerate (2-PG) into phosphoenolpyruvate (PEP). It is essential for the degradation of carbohydrates via glycolysis. The sequence is that of Enolase from Picosynechococcus sp. (strain ATCC 27264 / PCC 7002 / PR-6) (Agmenellum quadruplicatum).